Reading from the N-terminus, the 343-residue chain is Protein RecA (343 aa).

66 to 73 (GPESSGKT) is a binding site for ATP.

The protein belongs to the RecA family.

It localises to the cytoplasm. Functionally, can catalyze the hydrolysis of ATP in the presence of single-stranded DNA, the ATP-dependent uptake of single-stranded DNA by duplex DNA, and the ATP-dependent hybridization of homologous single-stranded DNAs. It interacts with LexA causing its activation and leading to its autocatalytic cleavage. The polypeptide is Protein RecA (Nitrosomonas europaea (strain ATCC 19718 / CIP 103999 / KCTC 2705 / NBRC 14298)).